Consider the following 84-residue polypeptide: Large ribosomal subunit protein eL34 (84 aa).

This sequence belongs to the eukaryotic ribosomal protein eL34 family.

This Pyrobaculum calidifontis (strain DSM 21063 / JCM 11548 / VA1) protein is Large ribosomal subunit protein eL34.